We begin with the raw amino-acid sequence, 88 residues long: DNA-directed RNA polymerase subunit omega (88 aa).

The protein belongs to the RNA polymerase subunit omega family. In terms of assembly, the RNAP catalytic core consists of 2 alpha, 1 beta, 1 beta' and 1 omega subunit. When a sigma factor is associated with the core the holoenzyme is formed, which can initiate transcription.

It carries out the reaction RNA(n) + a ribonucleoside 5'-triphosphate = RNA(n+1) + diphosphate. Functionally, promotes RNA polymerase assembly. Latches the N- and C-terminal regions of the beta' subunit thereby facilitating its interaction with the beta and alpha subunits. In Anaeromyxobacter dehalogenans (strain 2CP-1 / ATCC BAA-258), this protein is DNA-directed RNA polymerase subunit omega.